Consider the following 213-residue polypeptide: Ribonuclease Oy (213 aa).

H35 is a catalytic residue. A disulfide bridge links C51 with C96. The N-linked (GlcNAc...) asparagine glycan is linked to N52. Catalysis depends on residues E89 and H93. Residues N121 and N142 are each glycosylated (N-linked (GlcNAc...) asparagine). 2 disulfide bridges follow: C160–C198 and C178–C188.

This sequence belongs to the RNase T2 family.

It localises to the secreted. Its function is as follows. Releases mononucleotides from RNA in the order of 3'-GMP, 3'-AMP and 3'-UMP. The chain is Ribonuclease Oy from Magallana gigas (Pacific oyster).